A 121-amino-acid chain; its full sequence is Basic phospholipase A2 homolog piratoxin-1 (121 aa).

Intrachain disulfides connect cysteine 26–cysteine 115, cysteine 28–cysteine 44, cysteine 43–cysteine 95, cysteine 49–cysteine 121, cysteine 50–cysteine 88, cysteine 57–cysteine 81, and cysteine 75–cysteine 86. An important for membrane-damaging activities in eukaryotes and bacteria; heparin-binding region spans residues 105 to 117 (KLYRYHLKPFCKK).

It belongs to the phospholipase A2 family. Group II subfamily. K49 sub-subfamily. As to quaternary structure, homodimer; non-covalently linked. In terms of tissue distribution, expressed by the venom gland.

Its subcellular location is the secreted. Its activity is regulated as follows. Rosmarinic acid inhibits the myotoxic activity. Bromophenacyl bromide (BPB) inhibits the myotoxic activity through a covalent binding. Caffeic acid and aristolochic acid, two plant compounds used in folk medicine used to treat envenomation, inhibit the myotoxic activity. Snake venom phospholipase A2 (PLA2) homolog that lacks enzymatic activity. Is myotoxic and displays edema-inducing activities. Induces neuromuscular blockage. A model of myotoxic mechanism has been proposed: an apo Lys49-PLA2 is activated by the entrance of a hydrophobic molecule (e.g. fatty acid) at the hydrophobic channel of the protein leading to a reorientation of a monomer. This reorientation causes a transition between 'inactive' to 'active' states, causing alignment of C-terminal and membrane-docking sites (MDoS) side-by-side and putting the membrane-disruption sites (MDiS) in the same plane, exposed to solvent and in a symmetric position for both monomers. The MDoS region stabilizes the toxin on membrane by the interaction of charged residues with phospholipid head groups. Subsequently, the MDiS region destabilizes the membrane with penetration of hydrophobic residues. This insertion causes a disorganization of the membrane, allowing an uncontrolled influx of ions (i.e. calcium and sodium), and eventually triggering irreversible intracellular alterations and cell death. The chain is Basic phospholipase A2 homolog piratoxin-1 from Bothrops pirajai (Piraja's lancehead).